Here is a 372-residue protein sequence, read N- to C-terminus: Alanine dehydrogenase 2 (372 aa).

Residue histidine 95 is part of the active site. Position 169–199 (169–199 (KVTIIGGGQAGTNAAKIALGLGADVTILDVN)) interacts with NAD(+).

It belongs to the AlaDH/PNT family.

It carries out the reaction L-alanine + NAD(+) + H2O = pyruvate + NH4(+) + NADH + H(+). It functions in the pathway amino-acid degradation; L-alanine degradation via dehydrogenase pathway; NH(3) and pyruvate from L-alanine: step 1/1. In terms of biological role, may play a role in cell wall synthesis as L-alanine is an important constituent of the peptidoglycan layer. The polypeptide is Alanine dehydrogenase 2 (ald2) (Staphylococcus aureus (strain COL)).